The following is a 382-amino-acid chain: Nonsense-mediated mRNA decay factor SMG9 (382 aa).

The disordered stretch occupies residues Met-1–Gly-66.

It belongs to the SMG9 family.

Functionally, involved in nonsense-mediated decay (NMD) of mRNAs containing premature stop codons. Probable component of kinase complex containing smg-1 and recruited to stalled ribosomes. The sequence is that of Nonsense-mediated mRNA decay factor SMG9 (smg-9) from Caenorhabditis briggsae.